The sequence spans 295 residues: Putative aquaporin-12A (295 aa).

Residues 1–21 form a helical membrane-spanning segment; the sequence is MAGLNVSLSFFFATFALCEAA. Over 22–54 the chain is Extracellular; the sequence is RRASKALLPVGAYEVFAREAMRTLVELGPWAGD. The helical transmembrane segment at 55-75 threads the bilayer; that stretch reads FGPDLLLTLLFLLFLAHGVTL. Topologically, residues 76–99 are cytoplasmic; it reads DGASANPTVSLQEFLMAEQSLPGT. An intramembrane region (discontinuously helical) is located at residues 77 to 114; that stretch reads GASANPTVSLQEFLMAEQSLPGTLLKLAAQGLGMQAAC. Residues 81-83 carry the NPA 1 motif; that stretch reads NPT. The chain crosses the membrane as a helical span at residues 100–126; the sequence is LLKLAAQGLGMQAACTLMRLCWAWELS. Topologically, residues 127 to 145 are extracellular; the sequence is DLHLLQSLMAQSCSSALRT. A helical membrane pass occupies residues 146–166; it reads SVPHGALVEAACAFCFHLTLL. Topologically, residues 167 to 178 are cytoplasmic; sequence HLRHSPPAYSGP. Residues 179 to 199 form a helical membrane-spanning segment; it reads AVALLVTVTAYTAGPFTSAFF. The discontinuously helical intramembrane region spans 195–206; it reads TSAFFNPALAAS. The NPA 2 signature appears at 200 to 202; the sequence is NPA. Topologically, residues 200–215 are extracellular; that stretch reads NPALAASVTFACSGHT. The helical transmembrane segment at 216-236 threads the bilayer; sequence LLEYVQVYWLGPLTGMVLAVL. Over 237 to 295 the chain is Cytoplasmic; it reads LHQGRLPHLFQRNLFYGQKNKYRAPRGKPAPASGDTQTPAKGSSVREPGRSGVEGPHSS. The interval 257-295 is disordered; that stretch reads KYRAPRGKPAPASGDTQTPAKGSSVREPGRSGVEGPHSS.

The protein belongs to the MIP/aquaporin (TC 1.A.8) family. AQP11/AQP12 subfamily. Homotetramer; each monomer provides an independent water pore. In terms of tissue distribution, restricted to the pancreas.

The protein localises to the membrane. It carries out the reaction H2O(in) = H2O(out). Functionally, putative aquaporin. Could form homotetrameric transmembrane channels, with each monomer independently mediating water transport across the plasma membrane along its osmotic gradient. The chain is Putative aquaporin-12A from Homo sapiens (Human).